Consider the following 387-residue polypeptide: Gamma-butyrobetaine dioxygenase (387 aa).

Zn(2+) contacts are provided by Cys-38, Cys-40, Cys-43, and His-82. Fe cation contacts are provided by His-202, Asp-204, and His-347. Ser-351 bears the Phosphoserine mark.

This sequence belongs to the gamma-BBH/TMLD family. The cofactor is Fe(2+). It depends on L-ascorbate as a cofactor. Highly expressed in kidney; moderately expressed in liver; very low expression in brain.

The protein localises to the cytoplasm. It catalyses the reaction 4-(trimethylamino)butanoate + 2-oxoglutarate + O2 = carnitine + succinate + CO2. It participates in amine and polyamine biosynthesis; carnitine biosynthesis. Catalyzes the formation of L-carnitine from gamma-butyrobetaine. In Homo sapiens (Human), this protein is Gamma-butyrobetaine dioxygenase (BBOX1).